We begin with the raw amino-acid sequence, 253 residues long: tRNA pseudouridine synthase A (253 aa).

D53 (nucleophile) is an active-site residue. Residue Y112 coordinates substrate.

It belongs to the tRNA pseudouridine synthase TruA family. In terms of assembly, homodimer.

The enzyme catalyses uridine(38/39/40) in tRNA = pseudouridine(38/39/40) in tRNA. Functionally, formation of pseudouridine at positions 38, 39 and 40 in the anticodon stem and loop of transfer RNAs. This is tRNA pseudouridine synthase A from Lactococcus lactis subsp. cremoris (strain SK11).